We begin with the raw amino-acid sequence, 1118 residues long: Protein SUPPRESSOR OF NPR1-1 CONSTITUTIVE 4 (1118 aa).

The signal sequence occupies residues 1–35 (MNSQQSTRTKQMLQQSSTHLLCGVVLLQLFAAQVD). At 36–751 (AQRSTSPWQT…PLRNFLKVIR (716 aa)) the chain is on the extracellular side. Residues 51–353 (PLVIARGGFS…DFPLTASASV (303 aa)) form the GP-PDE 1 domain. Residues Asn-106, Asn-195, Asn-251, Asn-260, Asn-318, Asn-335, Asn-362, Asn-422, Asn-433, Asn-497, Asn-557, Asn-573, and Asn-656 are each glycosylated (N-linked (GlcNAc...) asparagine). Positions 369 to 670 (FLVISKNGAS…EFPYTAARYK (302 aa)) constitute a GP-PDE 2 domain. The helical transmembrane segment at 752–772 (IVSWSVAGVVLFLVLLTLVFC) threads the bilayer. The Cytoplasmic segment spans residues 773 to 1118 (FHRKRETRLR…SEDVSVYTEG (346 aa)). The region spanning 805–1094 (KSFAEVVGRG…ALEVPPRPVL (290 aa)) is the Protein kinase domain. Residues 811 to 819 (VGRGGFGIV) and Lys-833 contribute to the ATP site. Catalysis depends on Asp-928, which acts as the Proton acceptor.

This sequence in the N-terminal section; belongs to the glycerophosphoryl diester phosphodiesterase family. It in the C-terminal section; belongs to the protein kinase superfamily. Ser/Thr protein kinase family. As to expression, expressed in shoots, rosette and cauline leaves, stems, flowers and siliques.

It is found in the cell membrane. It catalyses the reaction a sn-glycero-3-phosphodiester + H2O = an alcohol + sn-glycerol 3-phosphate + H(+). The catalysed reaction is L-seryl-[protein] + ATP = O-phospho-L-seryl-[protein] + ADP + H(+). The enzyme catalyses L-threonyl-[protein] + ATP = O-phospho-L-threonyl-[protein] + ADP + H(+). Its function is as follows. Atypical receptor-like kinase involved in disease resistance. In Arabidopsis thaliana (Mouse-ear cress), this protein is Protein SUPPRESSOR OF NPR1-1 CONSTITUTIVE 4.